A 286-amino-acid polypeptide reads, in one-letter code: Protease HtpX homolog (286 aa).

Helical transmembrane passes span 7 to 27 (TFMLMAAITALFIVIGGMIGG) and 29 to 49 (SGMMLALLFALGMNFFSYWFS). His-131 contributes to the Zn(2+) binding site. Glu-132 is an active-site residue. His-135 is a Zn(2+) binding site. 2 consecutive transmembrane segments (helical) span residues 146-166 (LSATMAGAISALANFAVFFGG) and 177-197 (IAGIAVAILAPLAASLIQMAI). Position 202 (Glu-202) interacts with Zn(2+).

The protein belongs to the peptidase M48B family. Requires Zn(2+) as cofactor.

Its subcellular location is the cell inner membrane. This is Protease HtpX homolog from Ralstonia nicotianae (strain ATCC BAA-1114 / GMI1000) (Ralstonia solanacearum).